The chain runs to 704 residues: Elongation factor G (704 aa).

The tr-type G domain maps to 10 to 290 (NKVRNIGIMA…AVVDFLPSPL (281 aa)). Residues 19–26 (AHIDAGKT), 83–87 (DTPGH), and 137–140 (NKMD) each bind GTP. The interval 293–313 (PPMIGHDPRNEETEMTRKPST) is disordered. The segment covering 298–313 (HDPRNEETEMTRKPST) has biased composition (basic and acidic residues).

Belongs to the TRAFAC class translation factor GTPase superfamily. Classic translation factor GTPase family. EF-G/EF-2 subfamily.

The protein localises to the cytoplasm. Functionally, catalyzes the GTP-dependent ribosomal translocation step during translation elongation. During this step, the ribosome changes from the pre-translocational (PRE) to the post-translocational (POST) state as the newly formed A-site-bound peptidyl-tRNA and P-site-bound deacylated tRNA move to the P and E sites, respectively. Catalyzes the coordinated movement of the two tRNA molecules, the mRNA and conformational changes in the ribosome. The chain is Elongation factor G from Renibacterium salmoninarum (strain ATCC 33209 / DSM 20767 / JCM 11484 / NBRC 15589 / NCIMB 2235).